A 391-amino-acid polypeptide reads, in one-letter code: DNA/RNA-binding protein KIN17 (391 aa).

The C2H2-type zinc-finger motif lies at 28-50 (CQMCQKQCRDENGFKCHCMSESH). Residues 51–160 (QRQLLLASEN…RQLELEKKKK (110 aa)) form a winged helix-turn-helix (wHTH) region. Residue Lys-135 is modified to N6,N6,N6-trimethyllysine; by METTL22; alternate. Lys-135 is modified (N6-methyllysine; alternate). Coiled coils occupy residues 147–180 (ETIRRQLELEKKKKQDLDDEEKTAKFIEEQVRRG) and 252–275 (AKKKKSALDEIMELEEEKKRTART). Positions 206 to 258 (NLNKGAGGSAGATTSKSSSLGPSALKLLGSAASGKRKESSQSSAQPAKKKKSA) are disordered. The tract at residues 282-332 (GIVVKIITKKLGEKYHKKKGVVKEVIDRYTAVVKMTDSGDRLKLDQTHLET) is C-terminal subdomain A. The C-terminal subdomain B stretch occupies residues 338–389 (GKRVLVLNGGYRGNEGTLESINEKAFSATIVIETGPLKGRRVEGIQYEDISK).

It belongs to the KIN17 family. In terms of assembly, associated with DNA polymerase alpha, RFC1 and cyclin A, in multiprotein DNA replication complexes. Also associates with replication origins at the G1/S phase boundary and throughout the S phase in vivo. Highly expressed in transformed mouse AtT20 neuroendocrine cells. Expressed at a lower level in testis, kidney, skeletal muscle, liver, lung, spleen, brain and heart and kidney. In testis, expressed at much higher levels in proliferating cells than in differentiating cells. Not detected in embryo.

It is found in the nucleus. Its subcellular location is the cytoplasm. In terms of biological role, involved in DNA replication and the cellular response to DNA damage. May participate in DNA replication factories and create a bridge between DNA replication and repair mediated by high molecular weight complexes. May play a role in illegitimate recombination and regulation of gene expression. May participate in mRNA processing. Binds, in vitro, to double-stranded DNA. Also shown to bind preferentially to curved DNA in vitro and in vivo. Binds via its C-terminal domain to RNA in vitro. The chain is DNA/RNA-binding protein KIN17 from Mus musculus (Mouse).